Here is a 366-residue protein sequence, read N- to C-terminus: Phospho-N-acetylmuramoyl-pentapeptide-transferase (366 aa).

10 helical membrane passes run 27–47 (AALF…INSL), 71–91 (TPTM…LLWA), 93–113 (LSNV…AIGF), 134–154 (LGIE…TALA), 174–194 (FLIN…VGAG), 205–225 (GLAI…AYLA), 245–265 (LAVV…FNAP), 268–288 (AIFM…TVAV), 294–314 (IVMA…IIQV), and 343–363 (QVVI…LSTL).

It belongs to the glycosyltransferase 4 family. MraY subfamily. The cofactor is Mg(2+).

It is found in the cell inner membrane. The enzyme catalyses UDP-N-acetyl-alpha-D-muramoyl-L-alanyl-gamma-D-glutamyl-meso-2,6-diaminopimeloyl-D-alanyl-D-alanine + di-trans,octa-cis-undecaprenyl phosphate = di-trans,octa-cis-undecaprenyl diphospho-N-acetyl-alpha-D-muramoyl-L-alanyl-D-glutamyl-meso-2,6-diaminopimeloyl-D-alanyl-D-alanine + UMP. Its pathway is cell wall biogenesis; peptidoglycan biosynthesis. Functionally, catalyzes the initial step of the lipid cycle reactions in the biosynthesis of the cell wall peptidoglycan: transfers peptidoglycan precursor phospho-MurNAc-pentapeptide from UDP-MurNAc-pentapeptide onto the lipid carrier undecaprenyl phosphate, yielding undecaprenyl-pyrophosphoryl-MurNAc-pentapeptide, known as lipid I. The polypeptide is Phospho-N-acetylmuramoyl-pentapeptide-transferase (Rhizobium etli (strain CIAT 652)).